Here is a 545-residue protein sequence, read N- to C-terminus: MATNYIFVTGGVVSSLGKGIAAASLAAILEARGLNVTIMKLDPYINVDPGTMSPIQHGEVFVTVDGAETDLDLGHYERFIRTRMTSSNNFTTGRVYEDIIRRERKGEFLGATIQVIPHITNEIKRRVIEGSKGFDIAIIEIGGTVGDIESQPFLEAIRQLGTEIGRDHTLFMHLTLVPFLGAAGEVKTKPTQHSVKELRSIGIQPDVLVCRSDRSLPATERSKIALFTNVEERAVIGLRDVDSIYKIPSMLKAQSLDDIVTKRFNLDCPEADLHEWEEVLYQESNPNGEVTVGFVGKYVELPDAYKSVNEALAHAGLKNRLTVNIRYIDSQDLETKGTSKLEDVDAILVPGGFGDRGIEGKLIAAKYARENNIPYLGICLGMQVAMIEFARNVAGLTGANSTEFDENCSDPVVGLITEWMDASGQKELRDKHSDLGGTMRLGSQECHLEKGSKALKMYGKETIEERHRHRYEVNNHYIEPLEKAGLKITGYSHDKQLVEILENPKHRWFVAVQFHPEFTSTPRDGHPLFKGFIEAAGEFHKERLG.

The segment at 1–266 is amidoligase domain; sequence MATNYIFVTG…DDIVTKRFNL (266 aa). Residue Ser-14 coordinates CTP. Position 14 (Ser-14) interacts with UTP. ATP is bound by residues 15–20 and Asp-72; that span reads SLGKGI. Positions 72 and 140 each coordinate Mg(2+). CTP-binding positions include 147–149, 187–192, and Lys-223; these read DIE and KTKPTQ. UTP-binding positions include 187–192 and Lys-223; that span reads KTKPTQ. 239-241 contacts ATP; it reads RDV. The 252-residue stretch at 291–542 folds into the Glutamine amidotransferase type-1 domain; the sequence is TVGFVGKYVE…IEAAGEFHKE (252 aa). Gly-352 contributes to the L-glutamine binding site. Cys-379 functions as the Nucleophile; for glutamine hydrolysis in the catalytic mechanism. L-glutamine-binding positions include 380–383, Glu-403, and Arg-470; that span reads LGMQ. Residues His-515 and Glu-517 contribute to the active site.

The protein belongs to the CTP synthase family. Homotetramer.

The catalysed reaction is UTP + L-glutamine + ATP + H2O = CTP + L-glutamate + ADP + phosphate + 2 H(+). It catalyses the reaction L-glutamine + H2O = L-glutamate + NH4(+). The enzyme catalyses UTP + NH4(+) + ATP = CTP + ADP + phosphate + 2 H(+). Its pathway is pyrimidine metabolism; CTP biosynthesis via de novo pathway; CTP from UDP: step 2/2. Its activity is regulated as follows. Allosterically activated by GTP, when glutamine is the substrate; GTP has no effect on the reaction when ammonia is the substrate. The allosteric effector GTP functions by stabilizing the protein conformation that binds the tetrahedral intermediate(s) formed during glutamine hydrolysis. Inhibited by the product CTP, via allosteric rather than competitive inhibition. Functionally, catalyzes the ATP-dependent amination of UTP to CTP with either L-glutamine or ammonia as the source of nitrogen. Regulates intracellular CTP levels through interactions with the four ribonucleotide triphosphates. The sequence is that of CTP synthase from Idiomarina loihiensis (strain ATCC BAA-735 / DSM 15497 / L2-TR).